We begin with the raw amino-acid sequence, 527 residues long: MSLRPNSRTEARRSRYKVAVDAEEGRRRREDNMVEIRKNKREENLLKKRREGLLQAQQFPSTAAVSHLDKKLETLPELIAGVWSDDSSLQLECTTQFRKLLSIERNPPIEEVIQSGVVPRFVEFLARDDYPQLQFEAAWALTNIASGTSENTKVVIDYGSVPIFIRLLSSPSDDVREQAVWALGNIAGDSPKYRDLVLGHGALVALLAQFNEQAKLSMLRNATWTLSNFCRGKPQPLFEQTKAALPTLGRLIHSNDEEVLTDACWALSYLSDGTNDKIQAVIEAGVCSRLVELLLHSSPSVLIPALRTVGNIVTGDDIQTQVMIDHHALPCLVNLLTQNYKKSIKKEACWTISNITAGNRNQIQIVIEAGIIAPLVYLLQNAEFEIKKEAAWAISNATSGGNHDQIKFLVSQGCIKPLCDLLVCPDPRIVTVCLEGLENILKIGEADKDLGNTEGVNVYAQLIDEAEGLEKIENLQSHDNTEIYEKAVKILETYWLEEEDVPVSLNEDQFEFGGADISLPSGGFNFS.

Positions 1-58 (MSLRPNSRTEARRSRYKVAVDAEEGRRRREDNMVEIRKNKREENLLKKRREGLLQAQQ) constitute an IBB domain. ARM repeat units lie at residues 109–151 (IEEV…TSEN), 152–196 (TKVV…YRDL), 197–234 (VLGH…RGKP), 235–279 (QPLF…DKIQ), 280–319 (AVIE…DDIQ), 320–362 (TQVM…NRNQ), 363–403 (IQIV…GGNH), and 404–445 (DQIK…KIGE).

The protein belongs to the importin alpha family. In terms of assembly, forms a complex with importin subunit beta-1.

It localises to the cytoplasm. In terms of biological role, binds specifically and directly to substrates containing either a simple or bipartite NLS motif. Promotes docking of import substrates to the nuclear envelope. Seems to act as a cytosolic receptor for both simple and bipartite NLS motifs. This chain is Importin subunit alpha, found in Solanum lycopersicum (Tomato).